Reading from the N-terminus, the 288-residue chain is CUF1-dependent copper transporter 1 (288 aa).

N18 carries N-linked (GlcNAc...) asparagine glycosylation. A helical transmembrane segment spans residues 42-62 (MPSSAGATVGVCIGLFILAIF). Disordered stretches follow at residues 106–125 (PVLF…YNPL) and 154–180 (RESQ…GSGV). Over residues 158 to 167 (EGSSAPSYAH) the composition is skewed to polar residues. Over residues 168–177 (SQQGQAQAQG) the composition is skewed to low complexity. The helical transmembrane segment at 251 to 271 (LLMLVVMTFNIWWMISVVIGC) threads the bilayer.

It belongs to the copper transporter (Ctr) (TC 1.A.56) family. SLC31A subfamily. In terms of assembly, interacts with the copper acquisition factor BIM1.

It localises to the cell membrane. Functionally, high affinity copper transporter involved in Cu(+) import into the cell upon copper-limitating conditions. Functions with BIM1 and probably also FRE4 and FRE7, where FRE4 and FRE7 metalloreductases liberate the Cu(2+) bound to the BIM1 copper-binding site for subsequent import of Cu(+) into the cell by CTR1, via the reduction of BIM1-bound Cu(2+) to Cu(+) to reduce binding affinity for BIM1 but increase affinity for CTR1. The BIM1-CTR1 pathway for copper uptake plays a key role in colonization in the brain where copper amounts are low and thus in cryptococcal meningitis. The protein is CUF1-dependent copper transporter 1 of Cryptococcus neoformans var. grubii serotype A (strain H99 / ATCC 208821 / CBS 10515 / FGSC 9487) (Filobasidiella neoformans var. grubii).